Here is a 181-residue protein sequence, read N- to C-terminus: Acireductone dioxygenase (181 aa).

Fe(2+) is bound by residues His98, His100, Glu104, and His142. The Ni(2+) site is built by His98, His100, Glu104, and His142.

It belongs to the acireductone dioxygenase (ARD) family. As to quaternary structure, monomer. Requires Fe(2+) as cofactor. It depends on Ni(2+) as a cofactor.

It catalyses the reaction 1,2-dihydroxy-5-(methylsulfanyl)pent-1-en-3-one + O2 = 3-(methylsulfanyl)propanoate + CO + formate + 2 H(+). The enzyme catalyses 1,2-dihydroxy-5-(methylsulfanyl)pent-1-en-3-one + O2 = 4-methylsulfanyl-2-oxobutanoate + formate + 2 H(+). Its pathway is amino-acid biosynthesis; L-methionine biosynthesis via salvage pathway; L-methionine from S-methyl-5-thio-alpha-D-ribose 1-phosphate: step 5/6. Its function is as follows. Catalyzes 2 different reactions between oxygen and the acireductone 1,2-dihydroxy-3-keto-5-methylthiopentene (DHK-MTPene) depending upon the metal bound in the active site. Fe-containing acireductone dioxygenase (Fe-ARD) produces formate and 2-keto-4-methylthiobutyrate (KMTB), the alpha-ketoacid precursor of methionine in the methionine recycle pathway. Ni-containing acireductone dioxygenase (Ni-ARD) produces methylthiopropionate, carbon monoxide and formate, and does not lie on the methionine recycle pathway. The sequence is that of Acireductone dioxygenase from Alcanivorax borkumensis (strain ATCC 700651 / DSM 11573 / NCIMB 13689 / SK2).